Reading from the N-terminus, the 339-residue chain is Uroporphyrinogen decarboxylase (339 aa).

Substrate-binding positions include 21–25 (RQAGR), D71, Y146, S201, and H316.

Belongs to the uroporphyrinogen decarboxylase family. In terms of assembly, homodimer.

Its subcellular location is the cytoplasm. It carries out the reaction uroporphyrinogen III + 4 H(+) = coproporphyrinogen III + 4 CO2. Its pathway is porphyrin-containing compound metabolism; protoporphyrin-IX biosynthesis; coproporphyrinogen-III from 5-aminolevulinate: step 4/4. Catalyzes the decarboxylation of four acetate groups of uroporphyrinogen-III to yield coproporphyrinogen-III. The sequence is that of Uroporphyrinogen decarboxylase from Rickettsia canadensis (strain McKiel).